The sequence spans 55 residues: uncharacterized protein (55 aa).

A signal peptide spans 1–25 (MKFVKAIWPFVAVAIVFMFMSAFKF).

This is an uncharacterized protein from Bacillus subtilis (strain 168).